The following is a 208-amino-acid chain: N-(5'-phosphoribosyl)anthranilate isomerase (208 aa).

It belongs to the TrpF family.

It catalyses the reaction N-(5-phospho-beta-D-ribosyl)anthranilate = 1-(2-carboxyphenylamino)-1-deoxy-D-ribulose 5-phosphate. The protein operates within amino-acid biosynthesis; L-tryptophan biosynthesis; L-tryptophan from chorismate: step 3/5. The sequence is that of N-(5'-phosphoribosyl)anthranilate isomerase from Methanococcus maripaludis (strain C5 / ATCC BAA-1333).